A 203-amino-acid chain; its full sequence is Glycerol-3-phosphate acyltransferase (203 aa).

The next 5 helical transmembrane spans lie at 4–24 (IAYLLILGAYLLGSISSAVIF), 56–76 (LGVLMADILKGMLPVSLGFYL), 80–100 (ISVIGFIALAACLGHIFPVFF), 115–135 (IIPMGYSVAGLAVGTWLFVFL), and 149–169 (LIVPLYIWWFSSELTFPVALV).

This sequence belongs to the PlsY family. In terms of assembly, probably interacts with PlsX.

It is found in the cell inner membrane. It carries out the reaction an acyl phosphate + sn-glycerol 3-phosphate = a 1-acyl-sn-glycero-3-phosphate + phosphate. It participates in lipid metabolism; phospholipid metabolism. In terms of biological role, catalyzes the transfer of an acyl group from acyl-phosphate (acyl-PO(4)) to glycerol-3-phosphate (G3P) to form lysophosphatidic acid (LPA). This enzyme utilizes acyl-phosphate as fatty acyl donor, but not acyl-CoA or acyl-ACP. The polypeptide is Glycerol-3-phosphate acyltransferase (Glaesserella parasuis serovar 5 (strain SH0165) (Haemophilus parasuis)).